A 160-amino-acid chain; its full sequence is Cytochrome b6-f complex subunit 4 (160 aa).

The next 3 membrane-spanning stretches (helical) occupy residues 36–56, 95–115, and 131–151; these read LLYV…GLAV, LLGI…PFIE, and TFFM…IFPI.

The protein belongs to the cytochrome b family. PetD subfamily. The 4 large subunits of the cytochrome b6-f complex are cytochrome b6, subunit IV (17 kDa polypeptide, PetD), cytochrome f and the Rieske protein, while the 4 small subunits are PetG, PetL, PetM and PetN. The complex functions as a dimer.

The protein resides in the cellular thylakoid membrane. In terms of biological role, component of the cytochrome b6-f complex, which mediates electron transfer between photosystem II (PSII) and photosystem I (PSI), cyclic electron flow around PSI, and state transitions. This Gloeothece citriformis (strain PCC 7424) (Cyanothece sp. (strain PCC 7424)) protein is Cytochrome b6-f complex subunit 4.